Consider the following 145-residue polypeptide: MRKGERMLATSKEWERPRPVEASCSEGVLKVLKGCRTILKGNRHDSLYILQGSVETGESNLAETAKDETRLWHSRLAHMSQRGMELLVKKGFLDSSKVSSLKFCEDCIYGKTHRVNFSTGQHTTKNPLDYVHSDLWGAPSVPLSF.

It localises to the mitochondrion. This is an uncharacterized protein from Arabidopsis thaliana (Mouse-ear cress).